Here is a 633-residue protein sequence, read N- to C-terminus: Threonine--tRNA ligase (633 aa).

The TGS domain maps to 1–61 (MINVYFSDNS…TEDCKFEVIT (61 aa)). A catalytic region spans residues 242–533 (DHRKIGKELE…LIEHHSGKLP (292 aa)). 3 residues coordinate Zn(2+): C333, H384, and H510.

The protein belongs to the class-II aminoacyl-tRNA synthetase family. As to quaternary structure, homodimer. Zn(2+) is required as a cofactor.

The protein resides in the cytoplasm. The catalysed reaction is tRNA(Thr) + L-threonine + ATP = L-threonyl-tRNA(Thr) + AMP + diphosphate + H(+). Catalyzes the attachment of threonine to tRNA(Thr) in a two-step reaction: L-threonine is first activated by ATP to form Thr-AMP and then transferred to the acceptor end of tRNA(Thr). Also edits incorrectly charged L-seryl-tRNA(Thr). The sequence is that of Threonine--tRNA ligase from Ehrlichia ruminantium (strain Gardel).